Here is a 230-residue protein sequence, read N- to C-terminus: Ion-translocating oxidoreductase complex subunit E (230 aa).

5 helical membrane-spanning segments follow: residues 22-42 (LLGL…LGLG), 63-83 (TPAE…VSAV), 86-106 (LINA…PLIV), 125-145 (WLSA…MFVL), and 182-202 (PFLL…MLAV).

Belongs to the NqrDE/RnfAE family. The complex is composed of six subunits: RsxA, RsxB, RsxC, RsxD, RsxE and RsxG.

It localises to the cell inner membrane. In terms of biological role, part of a membrane-bound complex that couples electron transfer with translocation of ions across the membrane. Required to maintain the reduced state of SoxR. The chain is Ion-translocating oxidoreductase complex subunit E from Salmonella paratyphi A (strain ATCC 9150 / SARB42).